We begin with the raw amino-acid sequence, 476 residues long: Protein THYLAKOID RHODANESE-LIKE, chloroplastic (476 aa).

A chloroplast-targeting transit peptide spans 1 to 21 (MAATTTILSSAAPTPLTAPPR). Residues 1-29 (MAATTTILSSAAPTPLTAPPRARARAPAA) form a disordered region. Residues 11 to 21 (AAPTPLTAPPR) are compositionally biased toward low complexity. The N-terminal 37 residues, 22–58 (ARARAPAARRRRLRARDILGAALGLANGGASAALAAP), are a transit peptide targeting the thylakoid. Residues 100-120 (LVAAAGVAAVALPLVLAQVLG) traverse the membrane as a helical segment. The Rhodanese domain occupies 140 to 246 (EEPGAQLVDI…WLSSSLPWTA (107 aa)). A run of 2 helical transmembrane segments spans residues 264 to 284 (LPVTLGLAAATGLGILAYTEI) and 287 to 307 (VLQFLGSAAIVQLVASKLIYA). The segment at 342–476 (LPSTGTKSQP…PPSSPSPSAP (135 aa)) is disordered. Over residues 351-389 (PAITEAAPATAEAAPAAATATAAPPAAPVEETSTEAAPA) the composition is skewed to low complexity. The span at 403 to 412 (LKPPSSPSPL) shows a compositional bias: pro residues. A compositionally biased stretch (low complexity) spans 425–446 (ESAATESAPAVNSAPVAEAAPE). Residues 447–476 (AAPPAAPRPLSPYPNYPDLKPPSSPSPSAP) show a composition bias toward pro residues.

As to quaternary structure, component of high molecular weight thylakoid LFNRs-containing protein complexes containing LIR1, LFNR1, LFNR2, TIC62 and TROL proteins.

It is found in the plastid. It localises to the chloroplast thylakoid membrane. Functionally, rhodanese domain-containing protein required for anchoring ferredoxin--NADP reductase to the thylakoid membranes and sustaining efficient linear electron flow (LEF). This Oryza sativa subsp. indica (Rice) protein is Protein THYLAKOID RHODANESE-LIKE, chloroplastic.